A 72-amino-acid chain; its full sequence is Large ribosomal subunit protein bL28 (72 aa).

It belongs to the bacterial ribosomal protein bL28 family.

This chain is Large ribosomal subunit protein bL28, found in Chlorobium phaeovibrioides (strain DSM 265 / 1930) (Prosthecochloris vibrioformis (strain DSM 265)).